The sequence spans 708 residues: Glutamate--tRNA ligase, cytoplasmic (708 aa).

Interaction with ARC1 regions lie at residues 106–115 (NLRTFILGGL) and 141–157 (KVDV…EMDP). Residue 205-207 (RFP) participates in L-glutamate binding. Residues 210 to 219 (PSGYLHIGHA) carry the 'HIGH' region motif. H215 contacts ATP. D241 contributes to the L-glutamate binding site. T300 bears the Phosphothreonine mark. Residues 382–386 (YDFCV) and R400 each bind L-glutamate. ATP is bound by residues E403 and 437 to 441 (LLSKR). The short motif at 437-441 (LLSKR) is the 'KMSKS' region element.

It belongs to the class-I aminoacyl-tRNA synthetase family. Glutamate--tRNA ligase type 2 subfamily. Component of a yeast aminoacyl-tRNA synthase (aaRS) complex formed by methionyl-tRNA synthase MES1, glutamyl-tRNA synthase GUS1 and the tRNA aminoacylation cofactor ARC1 in a stoichiometric complex. Interacts (via N-ter) with ARC1 (via N-ter). Can also form a stable binary complex with ARC1 that is functional in terms of aminoacylation. ARC1 increases the affinity for cognate tRNAs due to the presence of a tRNA binding domain in the middle and C-terminal part of ARC1.

Its subcellular location is the cytoplasm. The protein localises to the mitochondrion. It catalyses the reaction tRNA(Glu) + L-glutamate + ATP = L-glutamyl-tRNA(Glu) + AMP + diphosphate. In terms of biological role, catalyzes the attachment of glutamate to tRNA(Glu) in a two-step reaction: glutamate is first activated by ATP to form Glu-AMP and then transferred to the acceptor end of tRNA(Glu). In mitochondria, constitutes the nondiscriminating glutamyl-tRNA synthase that generates the mitochondrial mischarged glutamyl-tRNA(Gln) substrate for the tRNA-dependent amidotransferase (AdT), which generates mitochondrial glutaminyl-tRNA(Gln) by transamidation of glutamyl-tRNA(Gln). The protein is Glutamate--tRNA ligase, cytoplasmic (GUS1) of Saccharomyces cerevisiae (strain ATCC 204508 / S288c) (Baker's yeast).